The chain runs to 326 residues: Vitamin B12 import system permease protein BtuC (326 aa).

Helical transmembrane passes span tryptophan 15–glutamate 35, leucine 61–phenylalanine 81, proline 88–glycine 108, leucine 112–leucine 132, leucine 146–phenylalanine 166, glycine 184–isoleucine 204, glycine 240–isoleucine 260, valine 274–alanine 294, and glutamate 302–leucine 322.

It belongs to the binding-protein-dependent transport system permease family. FecCD subfamily. In terms of assembly, the complex is composed of two ATP-binding proteins (BtuD), two transmembrane proteins (BtuC) and a solute-binding protein (BtuF).

The protein localises to the cell inner membrane. Functionally, part of the ABC transporter complex BtuCDF involved in vitamin B12 import. Involved in the translocation of the substrate across the membrane. The sequence is that of Vitamin B12 import system permease protein BtuC from Escherichia coli O8 (strain IAI1).